Here is a 155-residue protein sequence, read N- to C-terminus: Small ribosomal subunit protein uS7cz/uS7cy (155 aa).

Belongs to the universal ribosomal protein uS7 family. As to quaternary structure, part of the 30S ribosomal subunit.

The protein resides in the plastid. Functionally, one of the primary rRNA binding proteins, it binds directly to 16S rRNA where it nucleates assembly of the head domain of the 30S subunit. The sequence is that of Small ribosomal subunit protein uS7cz/uS7cy (rps7-A) from Cuscuta obtusiflora (Peruvian dodder).